The following is a 1419-amino-acid chain: Formin-1 (1419 aa).

Positions 1 to 622 (MEGTHCTLQL…TAEPQHQSPP (622 aa)) are microtubule-binding. Disordered regions lie at residues 138 to 194 (DWQG…MGKD), 262 to 331 (LGRE…KVVA), 343 to 641 (VVKT…TPKD), and 685 to 711 (SLTEQDDRTPGRLQAVWPPPKTKDTEE). The segment covering 151–163 (RSTHGNKKPRRSS) has biased composition (basic residues). Over residues 298–317 (SHQDPEKHPEAEKDEMEKPA) the composition is skewed to basic and acidic residues. The span at 394–411 (RSSQSPAGETASISSVSA) shows a compositional bias: polar residues. A compositionally biased stretch (basic and acidic residues) spans 425–438 (IESEKLDEAPEGKR). The interval 456–842 (NKRRAGLPLG…LNISSLSQLS (387 aa)) is mediates interaction with alpha-catenin. Positions 504 to 517 (FNNSASQSSTHKQT) are enriched in polar residues. Pro residues predominate over residues 520-529 (VPSPLSPRLP). Residues 614–623 (AEPQHQSPPG) are compositionally biased toward polar residues. Positions 685-694 (SLTEQDDRTP) are enriched in basic and acidic residues. Residues 720 to 774 (AEYQAAILHLKREHKEEIENLQAQFELRAFHIRGEHAMITARLEETIENLKHELE) adopt a coiled-coil conformation. Disordered regions lie at residues 859 to 978 (GMAS…AIEP) and 1390 to 1419 (SEKKVETKKINPTASLKERLRQKEASVTTN). 2 stretches are compositionally biased toward pro residues: residues 868-882 (LPPPPASIPPPPPLP) and 890-958 (PAPP…PPPG). In terms of domain architecture, FH1 spans 870 to 957 (PPPASIPPPP…PPGLAPPPPP (88 aa)). Residues 972–1388 (RKPAIEPSCP…KMAQESVSKL (417 aa)) enclose the FH2 domain.

This sequence belongs to the formin homology family. Cappuccino subfamily. Interacts with alpha-catenin and may interact with tubulin. Post-translationally, phosphorylated on serine and possibly threonine residues.

It is found in the nucleus. Its subcellular location is the cytoplasm. It localises to the cell junction. The protein localises to the adherens junction. The protein resides in the cell membrane. In terms of biological role, plays a role in the formation of adherens junction and the polymerization of linear actin cables. The polypeptide is Formin-1 (FMN1) (Homo sapiens (Human)).